A 119-amino-acid chain; its full sequence is Protein Wnt-4 (119 aa).

Ser-1 carries the O-palmitoleoyl serine; by PORCN lipid modification. 2 cysteine pairs are disulfide-bonded: Cys-69–Cys-100 and Cys-85–Cys-95. Asn-86 is a glycosylation site (N-linked (GlcNAc...) asparagine).

Belongs to the Wnt family. In terms of processing, palmitoleoylation is required for efficient binding to frizzled receptors. Depalmitoleoylation leads to Wnt signaling pathway inhibition.

The protein resides in the secreted. The protein localises to the extracellular space. Its subcellular location is the extracellular matrix. Ligand for members of the frizzled family of seven transmembrane receptors. Plays an important role in embryonic development. The polypeptide is Protein Wnt-4 (WNT-4) (Sceloporus occidentalis (Western fence lizard)).